We begin with the raw amino-acid sequence, 276 residues long: Ribonuclease 3 (276 aa).

In terms of domain architecture, RNase III spans 30–161 (LTAFIRSLFK…LTGAIYLDRG (132 aa)). A Mg(2+)-binding site is contributed by Glu74. Asp78 is a catalytic residue. Mg(2+)-binding residues include Asp147 and Glu150. The active site involves Glu150. One can recognise a DRBM domain in the interval 188–257 (NHKSRLIEHT…AEEAMGALER (70 aa)).

This sequence belongs to the ribonuclease III family. In terms of assembly, homodimer. Mg(2+) serves as cofactor.

The protein resides in the cytoplasm. It catalyses the reaction Endonucleolytic cleavage to 5'-phosphomonoester.. Functionally, digests double-stranded RNA. Involved in the processing of primary rRNA transcript to yield the immediate precursors to the large and small rRNAs (23S and 16S). Processes some mRNAs, and tRNAs when they are encoded in the rRNA operon. Processes pre-crRNA and tracrRNA of type II CRISPR loci if present in the organism. The chain is Ribonuclease 3 from Chlorobium luteolum (strain DSM 273 / BCRC 81028 / 2530) (Pelodictyon luteolum).